Consider the following 130-residue polypeptide: Galectin-2 (130 aa).

A Galectin domain is found at 4–130 (KFEVKDLNMK…GLQISSFKLE (127 aa)). A beta-D-galactoside is bound at residue 65-71 (WGQEQRE).

Homodimer.

Its function is as follows. This protein binds beta-galactoside. Its physiological function is not yet known. The polypeptide is Galectin-2 (Lgals2) (Mus musculus (Mouse)).